A 329-amino-acid polypeptide reads, in one-letter code: DNA-directed RNA polymerase subunit alpha (329 aa).

Residues 1 to 235 (MQGSVTEFLK…EQLEAFVDLR (235 aa)) are alpha N-terminal domain (alpha-NTD). The segment at 249–329 (FDPILLRPVD…DWPPASIADE (81 aa)) is alpha C-terminal domain (alpha-CTD).

This sequence belongs to the RNA polymerase alpha chain family. In terms of assembly, homodimer. The RNAP catalytic core consists of 2 alpha, 1 beta, 1 beta' and 1 omega subunit. When a sigma factor is associated with the core the holoenzyme is formed, which can initiate transcription.

The enzyme catalyses RNA(n) + a ribonucleoside 5'-triphosphate = RNA(n+1) + diphosphate. DNA-dependent RNA polymerase catalyzes the transcription of DNA into RNA using the four ribonucleoside triphosphates as substrates. This chain is DNA-directed RNA polymerase subunit alpha, found in Salmonella choleraesuis (strain SC-B67).